The following is a 436-amino-acid chain: Protein translocase subunit SecY (436 aa).

10 consecutive transmembrane segments (helical) span residues 19-39 (ILFT…TVPG), 68-88 (FSVF…VQLL), 116-136 (YISL…FNAL), 151-171 (LFIG…GEQI), 179-199 (GVSM…VKGI), 216-236 (IIFV…TTYV), 269-289 (VIPV…LQFL), 313-333 (GIAM…FVQI), 372-392 (VGSL…DLFG), and 395-415 (DTVA…IEGM).

This sequence belongs to the SecY/SEC61-alpha family. Component of the Sec protein translocase complex. Heterotrimer consisting of SecY, SecE and SecG subunits. The heterotrimers can form oligomers, although 1 heterotrimer is thought to be able to translocate proteins. Interacts with the ribosome. Interacts with SecDF, and other proteins may be involved. Interacts with SecA.

The protein resides in the cell membrane. Its function is as follows. The central subunit of the protein translocation channel SecYEG. Consists of two halves formed by TMs 1-5 and 6-10. These two domains form a lateral gate at the front which open onto the bilayer between TMs 2 and 7, and are clamped together by SecE at the back. The channel is closed by both a pore ring composed of hydrophobic SecY resides and a short helix (helix 2A) on the extracellular side of the membrane which forms a plug. The plug probably moves laterally to allow the channel to open. The ring and the pore may move independently. The sequence is that of Protein translocase subunit SecY from Streptococcus gordonii (strain Challis / ATCC 35105 / BCRC 15272 / CH1 / DL1 / V288).